A 161-amino-acid polypeptide reads, in one-letter code: MQTIEQQITNVIEESLTDMGFELVLVKFKGVNPKVVEILIDSLNGEKISVEDCTKASRTISAILDVEDLIEDAYSLEVASSGLERPLVKFENYNRFLGREVKIKLKELLNGKTRYQGKIIKAKNNKIYLKCEEQEVLIDYDLIKNANLVLTEEVFKKLLKQ.

It belongs to the RimP family.

Its subcellular location is the cytoplasm. Functionally, required for maturation of 30S ribosomal subunits. The sequence is that of Ribosome maturation factor RimP from Rickettsia felis (strain ATCC VR-1525 / URRWXCal2) (Rickettsia azadi).